A 177-amino-acid polypeptide reads, in one-letter code: ATP synthase subunit delta (177 aa).

It belongs to the ATPase delta chain family. In terms of assembly, F-type ATPases have 2 components, F(1) - the catalytic core - and F(0) - the membrane proton channel. F(1) has five subunits: alpha(3), beta(3), gamma(1), delta(1), epsilon(1). F(0) has three main subunits: a(1), b(2) and c(10-14). The alpha and beta chains form an alternating ring which encloses part of the gamma chain. F(1) is attached to F(0) by a central stalk formed by the gamma and epsilon chains, while a peripheral stalk is formed by the delta and b chains.

It is found in the cell inner membrane. In terms of biological role, f(1)F(0) ATP synthase produces ATP from ADP in the presence of a proton or sodium gradient. F-type ATPases consist of two structural domains, F(1) containing the extramembraneous catalytic core and F(0) containing the membrane proton channel, linked together by a central stalk and a peripheral stalk. During catalysis, ATP synthesis in the catalytic domain of F(1) is coupled via a rotary mechanism of the central stalk subunits to proton translocation. Functionally, this protein is part of the stalk that links CF(0) to CF(1). It either transmits conformational changes from CF(0) to CF(1) or is implicated in proton conduction. In Pasteurella multocida (strain Pm70), this protein is ATP synthase subunit delta.